We begin with the raw amino-acid sequence, 820 residues long: SART-1 family protein DOT2 (820 aa).

Basic and acidic residues-rich tracts occupy residues 1–156 (MEVE…DNRG), 210–219 (EEKRNAEKQR), and 426–445 (LGSRKDGRRQAMKEEKERIE). Disordered stretches follow at residues 1 to 177 (MEVE…SALD), 210 to 248 (EEKRNAEKQRAQQLSRIFEEQDNLNQGENEDGEDGEHLS), 420 to 445 (GLGAEDLGSRKDGRRQAMKEEKERIE), 523 to 544 (SSTNQTTDDNTTTGDETQENTV), 564 to 617 (KPES…PDEN), 657 to 678 (KLVGIVDDDGGKESKDKESKDR), 729 to 748 (KLKQMKNSDTPSQSVQRMRE), and 762 to 820 (GHVK…RPKP). Ser-22 is modified (phosphoserine). Coiled coils occupy residues 58-120 (RDKE…EKEK), 171-235 (KEAS…NLNQ), and 433-510 (RRQA…KEEA). Positions 525–543 (TNQTTDDNTTTGDETQENT) are enriched in low complexity. The segment covering 582 to 591 (VEVKEEHPDG) has biased composition (basic and acidic residues). Over residues 596 to 606 (NDTDMDAAEDS) the composition is skewed to acidic residues. Composition is skewed to basic and acidic residues over residues 607 to 617 (SDTKEITPDEN) and 665 to 678 (DGGKESKDKESKDR). Polar residues-rich tracts occupy residues 733 to 744 (MKNSDTPSQSVQ) and 767 to 776 (GQTSDPQSGF). A compositionally biased stretch (basic and acidic residues) spans 792 to 807 (GDRKVEHFLGIKRKSE).

It belongs to the SNU66/SART1 family. In terms of tissue distribution, expressed in lateral root cap, columella, meristem and quiescent center (QC). Expressed in young leaves.

It localises to the nucleus. In terms of biological role, plays a role in root, shoot and flower development. Probably required for normal root and shoot meristem organization and maintenance and the proper expression of PIN and PLT genes. Involved in leaf vasculature patterning. This is SART-1 family protein DOT2 from Arabidopsis thaliana (Mouse-ear cress).